Reading from the N-terminus, the 73-residue chain is Protein SlyX homolog (73 aa).

The interval 54 to 73 is disordered; the sequence is LQQAESNAPAAPANERPPHY. A compositionally biased stretch (low complexity) spans 57–67; the sequence is AESNAPAAPAN.

This sequence belongs to the SlyX family.

This chain is Protein SlyX homolog, found in Rhodopseudomonas palustris (strain BisA53).